The primary structure comprises 98 residues: UPF0213 protein BPUM_0019 (98 aa).

The 76-residue stretch at 4 to 79 folds into the GIY-YIG domain; sequence HNHYFYVLKC…KTWTRKKKDL (76 aa).

This sequence belongs to the UPF0213 family.

The chain is UPF0213 protein BPUM_0019 from Bacillus pumilus (strain SAFR-032).